Reading from the N-terminus, the 102-residue chain is Small ribosomal subunit protein uS10 (102 aa).

This sequence belongs to the universal ribosomal protein uS10 family. Part of the 30S ribosomal subunit.

Its function is as follows. Involved in the binding of tRNA to the ribosomes. This Rhodopseudomonas palustris (strain BisB18) protein is Small ribosomal subunit protein uS10.